The chain runs to 302 residues: Methionyl-tRNA formyltransferase (302 aa).

107–110 (SDLP) contacts (6S)-5,6,7,8-tetrahydrofolate.

Belongs to the Fmt family.

The enzyme catalyses L-methionyl-tRNA(fMet) + (6R)-10-formyltetrahydrofolate = N-formyl-L-methionyl-tRNA(fMet) + (6S)-5,6,7,8-tetrahydrofolate + H(+). Its function is as follows. Attaches a formyl group to the free amino group of methionyl-tRNA(fMet). The formyl group appears to play a dual role in the initiator identity of N-formylmethionyl-tRNA by promoting its recognition by IF2 and preventing the misappropriation of this tRNA by the elongation apparatus. The chain is Methionyl-tRNA formyltransferase from Rickettsia massiliae (strain Mtu5).